A 155-amino-acid chain; its full sequence is Transcriptional repressor NrdR (155 aa).

A zinc finger lies at Cys-3–Cys-34. In terms of domain architecture, ATP-cone spans Pro-49–Glu-139.

The protein belongs to the NrdR family. The cofactor is Zn(2+).

Negatively regulates transcription of bacterial ribonucleotide reductase nrd genes and operons by binding to NrdR-boxes. This is Transcriptional repressor NrdR from Anaeromyxobacter sp. (strain K).